The sequence spans 139 residues: Hydrogenase maturation factor HypA (139 aa).

Position 2 (His2) interacts with Ni(2+). 4 residues coordinate Zn(2+): Cys73, Cys76, Cys110, and Cys113.

Belongs to the HypA/HybF family.

In terms of biological role, involved in the maturation of [NiFe] hydrogenases. Required for nickel insertion into the metal center of the hydrogenase. The sequence is that of Hydrogenase maturation factor HypA from Thermococcus onnurineus (strain NA1).